The sequence spans 467 residues: Argininosuccinate lyase (467 aa).

The protein belongs to the lyase 1 family. Argininosuccinate lyase subfamily.

It is found in the cytoplasm. The enzyme catalyses 2-(N(omega)-L-arginino)succinate = fumarate + L-arginine. It functions in the pathway amino-acid biosynthesis; L-arginine biosynthesis; L-arginine from L-ornithine and carbamoyl phosphate: step 3/3. The polypeptide is Argininosuccinate lyase (Chromohalobacter salexigens (strain ATCC BAA-138 / DSM 3043 / CIP 106854 / NCIMB 13768 / 1H11)).